The chain runs to 420 residues: MEFPKPRQFRETSLLMYYLDVVFPLQYISPNNNCLGKREWLLTILTSARPTYYATLCLALLYKESLSTSCRSEQTLVWKREKTYYYILALQESQKLLGGLNKTFGITRLKGTVVALACMLQLIGFESSHLSRGDWRVHLLAANTLIPVLAEGWSTALQSGPPATSIWCELDESDFDSIDDQTSLSFEYLGALRFLSNSLAKIGILSCISVGPAAPFEDYGHLLDQPGLIQLEEVLGCKNWAMLTILEVGKLDRWKRQEQEHNRLSLKTLAMRAMIIEDMLTDELQKLPTSETLPDLITHIYAASIATYLHTVVSGLNPNLSEVQDSVCATILLLERLPDLQAVASVTWPLAVTGCMASESHKDFFRSTLRSYEATFSSLKKYDGVLEVLEDAWKKREVDTESPMRWEDLMDHHGLPVLLF.

This sequence belongs to the TRI10 transcription regulator family.

Its subcellular location is the nucleus. In terms of biological role, transcriptional activator of all of the trichothecene biosynthesis genes. Acts upstream of the cluster-encoded transcription factor TRI6 and is necessary for full expression of both the other trichothecene genes and the genes for the primary metabolic pathway that precedes the trichothecene biosynthetic pathway. This chain is Trichothecene biosynthesis transcription regulator TRI10, found in Fusarium sporotrichioides.